A 190-amino-acid chain; its full sequence is Peptidyl-tRNA hydrolase (190 aa).

A tRNA-binding site is contributed by Y18. The Proton acceptor role is filled by H23. TRNA-binding residues include F65, N67, and N113.

It belongs to the PTH family. As to quaternary structure, monomer.

It localises to the cytoplasm. It catalyses the reaction an N-acyl-L-alpha-aminoacyl-tRNA + H2O = an N-acyl-L-amino acid + a tRNA + H(+). Its function is as follows. Hydrolyzes ribosome-free peptidyl-tRNAs (with 1 or more amino acids incorporated), which drop off the ribosome during protein synthesis, or as a result of ribosome stalling. Functionally, catalyzes the release of premature peptidyl moieties from peptidyl-tRNA molecules trapped in stalled 50S ribosomal subunits, and thus maintains levels of free tRNAs and 50S ribosomes. The protein is Peptidyl-tRNA hydrolase of Akkermansia muciniphila (strain ATCC BAA-835 / DSM 22959 / JCM 33894 / BCRC 81048 / CCUG 64013 / CIP 107961 / Muc).